The primary structure comprises 282 residues: Glutamate--LysW ligase ArgX (282 aa).

ATP is bound by residues Lys-87, Lys-127, 131–137 (GSWGRLV), and 167–178 (QEYINYKSRDIR). The ATP-grasp domain occupies 91-277 (YSKLYREGIP…VAEELVSYVK (187 aa)). Arg-192 is a binding site for substrate. Asn-202 is a binding site for ATP. 203–204 (IA) lines the substrate pocket. Positions 237, 250, and 252 each coordinate Mg(2+). 256-260 (EFKGF) is a binding site for substrate. The short motif at 259–260 (GF) is the GF motif that is essential for ArgX substrate specificity element.

It belongs to the RimK family. LysX subfamily. Homotetramer. Interacts with LysW. It depends on Mg(2+) as a cofactor.

It catalyses the reaction [amino-group carrier protein]-C-terminal-L-glutamate + L-glutamate + ATP = [amino-group carrier protein]-C-terminal-gamma-(L-glutamyl)-L-glutamate + ADP + phosphate + H(+). The protein operates within amino-acid biosynthesis; L-arginine biosynthesis. Functionally, catalyzes the ATP-dependent formation of a covalent bond between the amino group of glutamate and the gamma-carboxyl group of the C-terminal glutamate residue in LysW. The sequence is that of Glutamate--LysW ligase ArgX from Sulfolobus acidocaldarius (strain ATCC 33909 / DSM 639 / JCM 8929 / NBRC 15157 / NCIMB 11770).